A 418-amino-acid chain; its full sequence is Lactosylceramide alpha-2,3-sialyltransferase (418 aa).

A disordered region spans residues M1–A25. Residues M1–S61 are Cytoplasmic-facing. Residues L62–I82 form a helical; Signal-anchor for type II membrane protein membrane-spanning segment. At L83–F418 the chain is on the lumenal side. 3 N-linked (GlcNAc...) asparagine glycosylation sites follow: N86, N236, and N390. Cysteines 195 and 353 form a disulfide.

The protein belongs to the glycosyltransferase 29 family. N-glycosylated. Ubiquitous. High expression in brain, skeletal muscle, placenta, and testis. mRNA widely distributed in human brain, but slightly elevated expression was observed in the cerebral cortex, temporal lobe, and putamen.

Its subcellular location is the golgi apparatus membrane. It catalyses the reaction a beta-D-Gal-(1-&gt;4)-beta-D-Glc-(1&lt;-&gt;1)-Cer(d18:1(4E)) + CMP-N-acetyl-beta-neuraminate = a ganglioside GM3 (d18:1(4E)) + CMP + H(+). It carries out the reaction ganglioside GA2 (d18:1(4E)/18:0) + CMP-N-acetyl-beta-neuraminate = ganglioside GM2 (d18:1(4E)/18:0) + CMP + H(+). The enzyme catalyses a beta-D-Gal-(1&lt;-&gt;1')-ceramide + CMP-N-acetyl-beta-neuraminate = N-acetyl-alpha-neuraminosyl-(2-&gt;3)-beta-D-galactosyl-(1&lt;-&gt;1')-ceramide + CMP + H(+). The catalysed reaction is a beta-D-galactosyl-(1&lt;-&gt;1')-N-acylsphing-4-enine + CMP-N-acetyl-beta-neuraminate = a ganglioside GM4 (d18:1(4E)) + CMP + H(+). It catalyses the reaction ganglioside GA1 (d18:1(4E)/18:0) + CMP-N-acetyl-beta-neuraminate = ganglioside GM1 (d18:1(4E)/18:0) + CMP + H(+). It participates in glycolipid biosynthesis. Functionally, transfers the sialyl group (N-acetyl-alpha-neuraminyl or NeuAc) from CMP-NeuAc to the non-reducing terminal galactose (Gal) of glycosphingolipids forming gangliosides (important molecules involved in the regulation of multiple cellular processes, including cell proliferation and differentiation, apoptosis, embryogenesis, development, and oncogenesis). Mainly involved in the biosynthesis of ganglioside GM3 but can also use different glycolipids as substrate acceptors such as D-galactosylceramide (GalCer), asialo-GM2 (GA2) and asialo-GM1 (GA1), although less preferentially than beta-D-Gal-(1-&gt;4)-beta-D-Glc-(1&lt;-&gt;1)-Cer (LacCer). In Homo sapiens (Human), this protein is Lactosylceramide alpha-2,3-sialyltransferase (ST3GAL5).